Consider the following 197-residue polypeptide: Nucleoside triphosphate pyrophosphatase (197 aa).

Asp71 serves as the catalytic Proton acceptor.

It belongs to the Maf family. The cofactor is a divalent metal cation.

It is found in the cytoplasm. The enzyme catalyses a ribonucleoside 5'-triphosphate + H2O = a ribonucleoside 5'-phosphate + diphosphate + H(+). The catalysed reaction is a 2'-deoxyribonucleoside 5'-triphosphate + H2O = a 2'-deoxyribonucleoside 5'-phosphate + diphosphate + H(+). Functionally, nucleoside triphosphate pyrophosphatase. May have a dual role in cell division arrest and in preventing the incorporation of modified nucleotides into cellular nucleic acids. This chain is Nucleoside triphosphate pyrophosphatase, found in Synechococcus sp. (strain JA-3-3Ab) (Cyanobacteria bacterium Yellowstone A-Prime).